We begin with the raw amino-acid sequence, 2442 residues long: CREB-binding protein (2442 aa).

Disordered stretches follow at residues 1–41 (MAEN…NDLP) and 74–179 (LRGG…CMNA). N-acetylalanine is present on alanine 2. Residues 20–30 (PGFSANDSTDF) are compositionally biased toward polar residues. Positions 80 to 90 (SSINPGIGNVS) are enriched in low complexity. Position 121 is a phosphoserine (serine 121). The segment covering 122–131 (PLSQGDSSAP) has biased composition (polar residues). Serine 124 carries the post-translational modification Phosphoserine; by ATM. Residues 136 to 150 (QAASTSGPTPAASQA) show a composition bias toward low complexity. The span at 151–172 (LNPQAQKQVGLATSSPATSQTG) shows a compositional bias: polar residues. Position 220 is an omega-N-methylarginine (arginine 220). An interaction with SRCAP region spans residues 227-410 (PTPAMQGASS…GKACQVAHCA (184 aa)). Residues 266 to 290 (KMGITGNTSPFGQPFSQAGGQPMGA) form a disordered region. Over residues 270–284 (TGNTSPFGQPFSQAG) the composition is skewed to polar residues. The TAZ-type 1 zinc-finger motif lies at 347-433 (DPEKRKLIQQ…RHDCPVCLPL (87 aa)). 12 residues coordinate Zn(2+): histidine 363, cysteine 367, cysteine 380, cysteine 385, histidine 394, cysteine 398, cysteine 404, cysteine 409, histidine 418, cysteine 422, cysteine 427, and cysteine 430. Residues 587–666 (GVRKGWHEHV…KIYKIQKELE (80 aa)) form the KIX domain. 2 positions are modified to asymmetric dimethylarginine: arginine 601 and arginine 625. Position 657 is an N6-acetyllysine (lysine 657). Composition is skewed to polar residues over residues 794-805 (LPQNQFPSSSGA) and 814-823 (PAQTGVSQGQ). A disordered region spans residues 794-1083 (LPQNQFPSSS…STSPSQPRKK (290 aa)). 2 stretches are compositionally biased toward pro residues: residues 844–860 (PCPP…PPPA) and 876–885 (GMTPPQPAAP). 2 stretches are compositionally biased toward low complexity: residues 886–929 (TQPS…VTPQ) and 937–952 (PSVA…PTPV). Polar residues predominate over residues 973–988 (PTPSSVASAETNSQQP). Lysine 998 is covalently cross-linked (Glycyl lysine isopeptide (Lys-Gly) (interchain with G-Cter in SUMO1)). Residues 1011–1021 (GESKGEPRSEM) show a composition bias toward basic and acidic residues. Residue lysine 1014 is modified to N6-acetyllysine. Residue serine 1030 is modified to Phosphoserine. A compositionally biased stretch (basic and acidic residues) spans 1032-1059 (VKEETDIAEQKSEPMEVDEKKPEVKVEV). Glycyl lysine isopeptide (Lys-Gly) (interchain with G-Cter in SUMO1) cross-links involve residues lysine 1033 and lysine 1056. The segment covering 1066-1078 (SSNGTASQSTSPS) has biased composition (low complexity). At serine 1076 the chain carries Phosphoserine. The Bromo domain maps to 1085–1192 (FKPEELRQAL…EVFEQEIDPV (108 aa)). The tract at residues 1124-1170 (DYFDIVKNPMDLSTIKRKLDTGQYQEPWQYVDDVWLMFNNAWLYNRK) is interaction with histone. Residues 1162–1180 (NNAWLYNRKTSRVYKFCSK) form an interaction with ASF1A region. Lysine 1216 is subject to N6-acetyllysine. The CBP/p300-type HAT domain occupies 1323–1700 (KFSAKRLQTT…MLVELHTQGQ (378 aa)). A phosphoserine; by IKKA mark is found at serine 1382 and serine 1386. An interaction with histone region spans residues 1433–1435 (YLD). Residues 1434–1436 (LDS), 1446–1447 (RT), isoleucine 1493, arginine 1498, and tryptophan 1502 contribute to the acetyl-CoA site. Positions 1460 to 1891 (YVKKLGYVTG…LPSPTSAPPG (432 aa)) are interaction with TRERF1. The segment covering 1556–1568 (LEQEEEERKKEES) has biased composition (basic and acidic residues). The segment at 1556–1615 (LEQEEEERKKEESTAASETTEGSQGDSKNAKKKNNKKTNKNKSSISRANKKKPSMPNVSN) is disordered. Lysine 1583, lysine 1591, lysine 1592, lysine 1595, and lysine 1597 each carry N6-acetyllysine. The span at 1585 to 1595 (AKKKNNKKTNK) shows a compositional bias: basic residues. The ZZ-type zinc finger occupies 1702-1750 (RFVYTCNECKHHVETRWHCTVCEDYDLCINCYNTKSHAHKMVKWGLGLD). Zn(2+)-binding residues include cysteine 1707, cysteine 1710, cysteine 1720, cysteine 1723, cysteine 1729, cysteine 1732, histidine 1738, and histidine 1740. Lysine 1741 and lysine 1744 each carry N6-acetyllysine. Serine 1763 is modified (phosphoserine). The segment at 1765 to 1846 (QESRRLSIQR…KCPVPFCLNI (82 aa)) adopts a TAZ-type 2 zinc-finger fold. Disordered regions lie at residues 1874–1959 (TRNV…VEAA) and 1977–2028 (INNS…PLPQ). A compositionally biased stretch (pro residues) spans 1900–1912 (PQTPQPPAQPQPS). Residues 1925–1940 (ARTQPPTTVSTGKPTS) are compositionally biased toward polar residues. Over residues 1943 to 1954 (PAPPPPAQPPPA) the composition is skewed to pro residues. Residues 2018–2027 (PGQWQQAPLP) show a composition bias toward low complexity. Phosphoserine occurs at positions 2063, 2076, and 2079. 5 stretches are compositionally biased toward low complexity: residues 2112–2137 (QPGM…HQQP), 2146–2160 (QAGV…QQQA), 2196–2219 (QLLQ…QGSA), 2228–2263 (HGQF…SMGQ), and 2294–2305 (RILQQQQMKQQI). 2 disordered regions span residues 2112–2263 (QPGM…SMGQ) and 2294–2433 (RILQ…TTGD). Composition is skewed to polar residues over residues 2315 to 2327 (SPQQ…QPQA) and 2334 to 2343 (QIATSLSNQV). Pro residues predominate over residues 2349 to 2372 (VQSPRPQSQPPHSSPSPRIQPQPS). The residue at position 2351 (serine 2351) is a Phosphoserine. Polar residues predominate over residues 2411–2424 (QLNTPSRSALSSEL).

As to quaternary structure, found in a complex containing NCOA2; NCOA3; IKKA; IKKB and IKBKG. Probably part of a complex with HIF1A and EP300. Interacts with GATA1; the interaction results in acetylation and enhancement of transcriptional activity of GATA1. Interacts with MAF and ZCCHC12. Interacts with DAXX; the interaction is dependent on CBP sumoylation and results in suppression of the transcriptional activity via recruitment of HDAC2 to DAXX. Interacts with phosphorylated CREB1. Interacts with CITED4 (C-terminal region). Interacts (via the TAZ-type 1 domain) with HIF1A. Interacts with SRCAP, CARM1, ELF3, MLLT7/FOXO4, N4BP2, NCOA1, NCOA3, NCOA6, PCAF, DDX5, DDX17, PELP1, PML, SMAD1, SMAD2, SMAD3, SPIB and TRERF1. Interacts with KLF1; the interaction results in acetylation of KLF1 and enhancement of its transcriptional activity. Interacts with MTDH. Interacts with NFATC4. Interacts with MAFG; the interaction acetylates MAFG in the basic region and stimulates NFE2 transcriptional activity through increasing its DNA-binding activity. Interacts with IRF2; the interaction acetylates IRF2 and regulates its activity on the H4 promoter. Interacts with IRF3 (when phosphorylated); forming the dsRNA-activated factor 1 (DRAF1), a complex which activates the transcription of the type I interferon genes. Interacts (via N-terminus) with SS18L1/CREST (via C-terminus). Interacts with MECOM. Interacts with CITED1 (via C-terminus). Interacts with FOXO1; the interaction acetylates FOXO1 and inhibits its transcriptional activity. Interacts with NPAS2, CLOCK and BMAL1. Interacts with ASF1A and ASF1B; this promotes histone acetylation. Interacts with acetylated TP53/p53 and with the acetylated histones H3 and H4. Interacts (via transactivation domain and C-terminus) with PCNA; the interaction occurs on chromatin in UV-irradiated damaged cells. Interacts with DHX9 (via N-terminus); this interaction mediates association with RNA polymerase II holoenzyme and stimulates CREB-dependent transcriptional activation. Interacts with SMAD4; negatively regulated by ZBTB7A. Interacts with DUX4 (via C-terminus). Forms a complex with KMT2A and CREB1. Interacts with DDX3X; this interaction may facilitate HNF4A acetylation. Interacts with MSX1; the interaction may inhibit MSX1 autoinactivation. Interacts with ACSS2. In terms of assembly, (Microbial infection) Interacts with HTLV-1 Tax, p30II and HBZ. (Microbial infection) Interacts with human herpes virus 8/HHV-8 protein vIRF-1; this interaction inhibits CREBBP binding to IRF3. As to quaternary structure, (Microbial infection) Interacts with HIV-1 Tat. Methylation of the KIX domain by CARM1 blocks association with CREB. This results in the blockade of CREB signaling, and in activation of apoptotic response. Post-translationally, phosphorylated by CHUK/IKKA at Ser-1382 and Ser-1386; these phosphorylations promote cell growth by switching the binding preference of CREBBP from TP53 to NF-kappa-B. Phosphorylated by _ at Ser-124 in response to DNA damage, promoting interaction with MRE11 and lactylation of MRE11. In terms of processing, sumoylation negatively regulates transcriptional activity via the recruitment of DAAX. Autoacetylation is required for binding to protein substrates, such as acetylated histones and acetylated TP53/p53. Autoacetylation is induced by glucose and fatty acids.

It is found in the cytoplasm. Its subcellular location is the nucleus. The catalysed reaction is L-lysyl-[histone] + acetyl-CoA = N(6)-acetyl-L-lysyl-[histone] + CoA + H(+). The enzyme catalyses L-lysyl-[protein] + acetyl-CoA = N(6)-acetyl-L-lysyl-[protein] + CoA + H(+). It catalyses the reaction (S)-lactoyl-CoA + L-lysyl-[protein] = N(6)-[(S)-lactoyl]-L-lysyl-[protein] + CoA + H(+). Its function is as follows. Acetylates histones, giving a specific tag for transcriptional activation. Mediates acetylation of histone H3 at 'Lys-18' and 'Lys-27' (H3K18ac and H3K27ac, respectively). Also acetylates non-histone proteins, like DDX21, FBL, IRF2, MAFG, NCOA3, POLR1E/PAF53 and FOXO1. Binds specifically to phosphorylated CREB and enhances its transcriptional activity toward cAMP-responsive genes. Acts as a coactivator of ALX1. Acts as a circadian transcriptional coactivator which enhances the activity of the circadian transcriptional activators: NPAS2-BMAL1 and CLOCK-BMAL1 heterodimers. Acetylates PCNA; acetylation promotes removal of chromatin-bound PCNA and its degradation during nucleotide excision repair (NER). Acetylates POLR1E/PAF53, leading to decreased association of RNA polymerase I with the rDNA promoter region and coding region. Acetylates DDX21, thereby inhibiting DDX21 helicase activity. Acetylates FBL, preventing methylation of 'Gln-105' of histone H2A (H2AQ104me). In addition to protein acetyltransferase, can use different acyl-CoA substrates, such as lactoyl-CoA, and is able to mediate protein lactylation. Catalyzes lactylation of MRE11 in response to DNA damage, thereby promoting DNA double-strand breaks (DSBs) via homologous recombination (HR). Functions as a transcriptional coactivator for SMAD4 in the TGF-beta signaling pathway. The protein is CREB-binding protein of Homo sapiens (Human).